Consider the following 336-residue polypeptide: Eukaryotic translation initiation factor 3 subunit H (336 aa).

The MPN domain maps to 21 to 154 (VQCDGLAAMK…LKAYRLTPQA (134 aa)).

This sequence belongs to the eIF-3 subunit H family. Component of the eukaryotic translation initiation factor 3 (eIF-3) complex.

The protein localises to the cytoplasm. Its function is as follows. Component of the eukaryotic translation initiation factor 3 (eIF-3) complex, which is involved in protein synthesis of a specialized repertoire of mRNAs and, together with other initiation factors, stimulates binding of mRNA and methionyl-tRNAi to the 40S ribosome. The eIF-3 complex specifically targets and initiates translation of a subset of mRNAs involved in cell proliferation. The polypeptide is Eukaryotic translation initiation factor 3 subunit H (Culex quinquefasciatus (Southern house mosquito)).